The primary structure comprises 511 residues: 2'-5'-oligoadenylate synthase-like protein 1 (511 aa).

Ubiquitin-like domains lie at 350–429 (IQVT…ISPE) and 430–506 (IQVF…EGAA).

Belongs to the 2-5A synthase family. Specifically interacts with the ligand binding domain of the thyroid receptor (TR). TRIP14 does not require the presence of thyroid hormone for its interaction. Binds MBD1.

It localises to the nucleus. The protein localises to the nucleolus. Its subcellular location is the cytoplasm. Its function is as follows. Does not have 2'-5'-OAS activity, but can bind double-stranded RNA. Displays antiviral activity via an alternative antiviral pathway independent of RNase L. This Mus musculus (Mouse) protein is 2'-5'-oligoadenylate synthase-like protein 1 (Oasl1).